A 180-amino-acid chain; its full sequence is ATP synthase subunit delta, chloroplastic (180 aa).

It belongs to the ATPase delta chain family. As to quaternary structure, F-type ATPases have 2 components, F(1) - the catalytic core - and F(0) - the membrane proton channel. F(1) has five subunits: alpha(3), beta(3), gamma(1), delta(1), epsilon(1). CF(0) has four main subunits: a(1), b(1), b'(1) and c(10-14). The alpha and beta chains form an alternating ring which encloses part of the gamma chain. F(1) is attached to F(0) by a central stalk formed by the gamma and epsilon chains, while a peripheral stalk is formed by the delta, b and b' chains.

The protein resides in the plastid. Its subcellular location is the chloroplast thylakoid membrane. F(1)F(0) ATP synthase produces ATP from ADP in the presence of a proton or sodium gradient. F-type ATPases consist of two structural domains, F(1) containing the extramembraneous catalytic core and F(0) containing the membrane proton channel, linked together by a central stalk and a peripheral stalk. During catalysis, ATP synthesis in the catalytic domain of F(1) is coupled via a rotary mechanism of the central stalk subunits to proton translocation. Its function is as follows. This protein is part of the stalk that links CF(0) to CF(1). It either transmits conformational changes from CF(0) to CF(1) or is implicated in proton conduction. This is ATP synthase subunit delta, chloroplastic from Rhodomonas salina (Cryptomonas salina).